Reading from the N-terminus, the 337-residue chain is Phosphate acyltransferase (337 aa).

Belongs to the PlsX family. As to quaternary structure, homodimer. Probably interacts with PlsY.

The protein resides in the cytoplasm. It catalyses the reaction a fatty acyl-[ACP] + phosphate = an acyl phosphate + holo-[ACP]. It participates in lipid metabolism; phospholipid metabolism. Catalyzes the reversible formation of acyl-phosphate (acyl-PO(4)) from acyl-[acyl-carrier-protein] (acyl-ACP). This enzyme utilizes acyl-ACP as fatty acyl donor, but not acyl-CoA. The polypeptide is Phosphate acyltransferase (Ehrlichia chaffeensis (strain ATCC CRL-10679 / Arkansas)).